We begin with the raw amino-acid sequence, 295 residues long: Urease accessory protein UreD (295 aa).

The protein belongs to the UreD family. As to quaternary structure, ureD, UreF and UreG form a complex that acts as a GTP-hydrolysis-dependent molecular chaperone, activating the urease apoprotein by helping to assemble the nickel containing metallocenter of UreC. The UreE protein probably delivers the nickel.

Its subcellular location is the cytoplasm. Functionally, required for maturation of urease via the functional incorporation of the urease nickel metallocenter. This is Urease accessory protein UreD from Ralstonia nicotianae (strain ATCC BAA-1114 / GMI1000) (Ralstonia solanacearum).